Consider the following 219-residue polypeptide: Ribose-5-phosphate isomerase A (219 aa).

Substrate is bound by residues 28–31 (TGST), 81–84 (DGAD), and 94–97 (KGGG). Residue Glu-103 is the Proton acceptor of the active site. A substrate-binding site is contributed by Lys-121.

It belongs to the ribose 5-phosphate isomerase family. In terms of assembly, homodimer.

It carries out the reaction aldehydo-D-ribose 5-phosphate = D-ribulose 5-phosphate. Its pathway is carbohydrate degradation; pentose phosphate pathway; D-ribose 5-phosphate from D-ribulose 5-phosphate (non-oxidative stage): step 1/1. Its function is as follows. Catalyzes the reversible conversion of ribose-5-phosphate to ribulose 5-phosphate. In Methylibium petroleiphilum (strain ATCC BAA-1232 / LMG 22953 / PM1), this protein is Ribose-5-phosphate isomerase A.